Reading from the N-terminus, the 1379-residue chain is DNA-directed RNA polymerase subunit beta'' (1379 aa).

Zn(2+) is bound by residues cysteine 224, cysteine 295, cysteine 302, and cysteine 305. A disordered region spans residues 503–524 (SVQSLSVKRRSTSKLSETNDEA).

The protein belongs to the RNA polymerase beta' chain family. RpoC2 subfamily. In terms of assembly, in plastids the minimal PEP RNA polymerase catalytic core is composed of four subunits: alpha, beta, beta', and beta''. When a (nuclear-encoded) sigma factor is associated with the core the holoenzyme is formed, which can initiate transcription. Requires Zn(2+) as cofactor.

The protein localises to the plastid. It carries out the reaction RNA(n) + a ribonucleoside 5'-triphosphate = RNA(n+1) + diphosphate. Its function is as follows. DNA-dependent RNA polymerase catalyzes the transcription of DNA into RNA using the four ribonucleoside triphosphates as substrates. The protein is DNA-directed RNA polymerase subunit beta'' of Cuscuta exaltata (Tall dodder).